The following is a 456-amino-acid chain: ATP synthase subunit beta 1 (456 aa).

152–159 (GGAGVGKS) contributes to the ATP binding site.

The protein belongs to the ATPase alpha/beta chains family. F-type ATPases have 2 components, CF(1) - the catalytic core - and CF(0) - the membrane proton channel. CF(1) has five subunits: alpha(3), beta(3), gamma(1), delta(1), epsilon(1). CF(0) has three main subunits: a(1), b(2) and c(9-12). The alpha and beta chains form an alternating ring which encloses part of the gamma chain. CF(1) is attached to CF(0) by a central stalk formed by the gamma and epsilon chains, while a peripheral stalk is formed by the delta and b chains.

Its subcellular location is the cell membrane. The catalysed reaction is ATP + H2O + 4 H(+)(in) = ADP + phosphate + 5 H(+)(out). Functionally, produces ATP from ADP in the presence of a proton gradient across the membrane. The catalytic sites are hosted primarily by the beta subunits. This chain is ATP synthase subunit beta 1, found in Listeria innocua serovar 6a (strain ATCC BAA-680 / CLIP 11262).